We begin with the raw amino-acid sequence, 607 residues long: Rap1 GTPase-GDP dissociation stimulator 1-A (607 aa).

ARM repeat units lie at residues 79-118 (ELMR…NICY), 170-211 (DSLQ…NLAE), 347-390 (DGNC…NLAI), 391-431 (PVVN…MLID), and 479-519 (SKDV…LIAA).

In terms of assembly, interacts with ralB. Probably interacts with the post-translationally isoprenylated (geranyl-geranylation) forms of ral proteins. Interacts with both GDP-bound and GTP-bound forms of ralA, but interaction is much stronger with ralA-GDP. Weakly expressed in adult tissues with highest levels found in spleen, kidney, skin and A6 cells.

Its subcellular location is the cytoplasm. It is found in the cytosol. The protein resides in the endoplasmic reticulum. It localises to the mitochondrion. Functionally, stimulates GDP/GTP exchange reaction of a group of small GTP-binding proteins (G proteins) including Rap1a/Rap1b, RhoA, RhoB and KRas, by stimulating the dissociation of GDP from and the subsequent binding of GTP to each small G protein. This is Rap1 GTPase-GDP dissociation stimulator 1-A (rap1gds1-a) from Xenopus laevis (African clawed frog).